We begin with the raw amino-acid sequence, 367 residues long: UDP-N-acetylglucosamine--N-acetylmuramyl-(pentapeptide) pyrophosphoryl-undecaprenol N-acetylglucosamine transferase (367 aa).

Residues 11 to 13, Asn-125, Arg-163, Ser-197, and Gln-289 contribute to the UDP-N-acetyl-alpha-D-glucosamine site; that span reads TAG.

This sequence belongs to the glycosyltransferase 28 family. MurG subfamily.

The protein resides in the cell membrane. The catalysed reaction is di-trans,octa-cis-undecaprenyl diphospho-N-acetyl-alpha-D-muramoyl-L-alanyl-D-glutamyl-meso-2,6-diaminopimeloyl-D-alanyl-D-alanine + UDP-N-acetyl-alpha-D-glucosamine = di-trans,octa-cis-undecaprenyl diphospho-[N-acetyl-alpha-D-glucosaminyl-(1-&gt;4)]-N-acetyl-alpha-D-muramoyl-L-alanyl-D-glutamyl-meso-2,6-diaminopimeloyl-D-alanyl-D-alanine + UDP + H(+). Its pathway is cell wall biogenesis; peptidoglycan biosynthesis. Its function is as follows. Cell wall formation. Catalyzes the transfer of a GlcNAc subunit on undecaprenyl-pyrophosphoryl-MurNAc-pentapeptide (lipid intermediate I) to form undecaprenyl-pyrophosphoryl-MurNAc-(pentapeptide)GlcNAc (lipid intermediate II). The protein is UDP-N-acetylglucosamine--N-acetylmuramyl-(pentapeptide) pyrophosphoryl-undecaprenol N-acetylglucosamine transferase of Clavibacter sepedonicus (Clavibacter michiganensis subsp. sepedonicus).